Reading from the N-terminus, the 64-residue chain is Large ribosomal subunit protein bL28 (64 aa).

The tract at residues methionine 1–lysine 26 is disordered.

This sequence belongs to the bacterial ribosomal protein bL28 family.

The sequence is that of Large ribosomal subunit protein bL28 from Ureaplasma urealyticum serovar 10 (strain ATCC 33699 / Western).